A 682-amino-acid chain; its full sequence is Guanylate cyclase soluble subunit beta-2 (682 aa).

H43 is a heme binding site. Residues T408–E536 enclose the Guanylate cyclase domain. Residues M592–S667 form a disordered region. The segment covering R649 to S667 has biased composition (polar residues).

The protein belongs to the adenylyl cyclase class-4/guanylyl cyclase family. Heterodimer of an alpha and a beta chain. The cofactor is heme. Kidney and liver.

It localises to the cytoplasm. It carries out the reaction GTP = 3',5'-cyclic GMP + diphosphate. With respect to regulation, activated by nitric oxide in the presence of magnesium or manganese ions. This chain is Guanylate cyclase soluble subunit beta-2 (Gucy1b2), found in Rattus norvegicus (Rat).